A 209-amino-acid polypeptide reads, in one-letter code: Glycolipid transfer protein B (209 aa).

2 consecutive repeat copies span residues 45 to 55 (IKADITGNITK) and 56 to 66 (IRSVYESNPTQ). The tract at residues 45-66 (IKADITGNITKIRSVYESNPTQ) is 2 X 12 AA approximate tandem repeats. 48–55 (DITGNITK) lines the beta-D-galactosyl-(1-&gt;4)-beta-D-glucosyl-(1&lt;-&gt;1)-N-[(9Z)-octadecenoyl]-sphing-4-enine pocket. Beta-D-galactosyl-(1-&gt;4)-beta-D-glucosyl-(1&lt;-&gt;1)-N-[(9Z)-octadecenoyl]-sphing-4-enine contacts are provided by H140 and Y207.

Belongs to the GLTP family.

The protein localises to the cytoplasm. Functionally, accelerates the intermembrane transfer of various glycolipids. Catalyzes the transfer of various glycosphingolipids between membranes but does not catalyze the transfer of phospholipids. May be involved in the intracellular translocation of glucosylceramides. This Xenopus laevis (African clawed frog) protein is Glycolipid transfer protein B (gltp-b).